A 119-amino-acid chain; its full sequence is Protein TusC (119 aa).

Belongs to the DsrF/TusC family. As to quaternary structure, heterohexamer, formed by a dimer of trimers. The hexameric TusBCD complex contains 2 copies each of TusB, TusC and TusD. The TusBCD complex interacts with TusE.

Its subcellular location is the cytoplasm. In terms of biological role, part of a sulfur-relay system required for 2-thiolation of 5-methylaminomethyl-2-thiouridine (mnm(5)s(2)U) at tRNA wobble positions. The chain is Protein TusC from Escherichia coli O157:H7.